Reading from the N-terminus, the 712-residue chain is MSQEKQVFSIDLAGRQLTVETGQLAKQANGAVLVRYGDTAVLSTATASKEAKNVDFFPLTVNYEERLYAVGKIPGGFIKREGRPSEKAILASRLIDRPIRPLFADGFRNEVQVVSIVMSVDQDCSSEMAAMLGSSLALSISDIPFEGPIAGATVGRINGEFVINPTVEQQEQSDIHLVVAGTKDAINMVEAGADQVPEETMLEAIMFGHDEIKRLIAFQEEIVQAVGKEKSEVKLYEVDADLNQAVREMAEKDMHSAIQVHEKHAREDAINEVKKRVIEHYEAQEADADTLGQVNEILYKIVKEEVRRLITVEKIRPDGRKGDEIRPLASEVGILSRTHGSGLFTRGQTQALSICTLGALGDVQILDGLGVEESKRFMHHYNFPSFSVGETRPMRGPGRREIGHGALGERALEPVIPSEKDFPYTVRLVSEVLESNGSTSQASICGSTLAMMDAGVPLKAPVAGIAMGLVKTGEHYTILSDIQGMEDHLGDMDFKVAGTAHGVTALQMDIKIDGLSREILEEALQQAKVGRVHILNHMLSVIAEPRTELSAYAPKIITMTINPDKIRDVIGPSGKQINKIIEETGVKIDIEQDGTVFISSINQEMNDKAKKIIEDIVREVQVGEIYEGKVKRVEKFGAFVELFSGKDGLVHISELALERVGKVEDVVKIGDVITVKVIEIDKQGRVNLSRKVLLKEEQEKEAAKEENKQEQQ.

Mg(2+)-binding residues include Asp487 and Asp493. The region spanning 554–613 (PKIITMTINPDKIRDVIGPSGKQINKIIEETGVKIDIEQDGTVFISSINQEMNDKAKKII) is the KH domain. Positions 623–691 (GEIYEGKVKR…KQGRVNLSRK (69 aa)) constitute an S1 motif domain.

Belongs to the polyribonucleotide nucleotidyltransferase family. Mg(2+) is required as a cofactor.

The protein localises to the cytoplasm. The catalysed reaction is RNA(n+1) + phosphate = RNA(n) + a ribonucleoside 5'-diphosphate. Involved in mRNA degradation. Catalyzes the phosphorolysis of single-stranded polyribonucleotides processively in the 3'- to 5'-direction. The polypeptide is Polyribonucleotide nucleotidyltransferase (Bacillus anthracis (strain CDC 684 / NRRL 3495)).